The chain runs to 368 residues: Endoglucanase (368 aa).

The N-terminal stretch at 1 to 21 is a signal peptide; the sequence is MNVLRSGIVTMLLLAAFSVQA. E55 (proton donor) is an active-site residue. The active-site Nucleophile is the D116.

The protein belongs to the glycosyl hydrolase 8 (cellulase D) family.

It is found in the secreted. The enzyme catalyses Endohydrolysis of (1-&gt;4)-beta-D-glucosidic linkages in cellulose, lichenin and cereal beta-D-glucans.. Its pathway is glycan metabolism; bacterial cellulose biosynthesis. Hydrolyzes carboxymethylcellulose. The chain is Endoglucanase (bcsZ) from Escherichia coli (strain K12).